A 396-amino-acid polypeptide reads, in one-letter code: Peptide chain release factor 1, mitochondrial (396 aa).

Gln268 carries the post-translational modification N5-methylglutamine. The segment at 317-340 (LEKEEKERNARKDQVSTTDRSDKI) is disordered.

This sequence belongs to the prokaryotic/mitochondrial release factor family. In terms of processing, methylation of glutamine in the GGQ triplet is conserved from bacteria to mammals.

Its subcellular location is the mitochondrion. Its function is as follows. Mitochondrial peptide chain release factor that directs the termination of translation in response to the peptide chain termination codons UAA and UAG. In Kluyveromyces lactis (strain ATCC 8585 / CBS 2359 / DSM 70799 / NBRC 1267 / NRRL Y-1140 / WM37) (Yeast), this protein is Peptide chain release factor 1, mitochondrial (MRF1).